The following is a 380-amino-acid chain: MGIQGLAKLIADVAPSAIRENDIKSYFGRKVAIDASMSIYQFLIAVRQGGDVLQNEEGETTSHLMGMFYRTIRMMENGIKPVYVFDGKPPQLKSGELAKRSERRAEAEKQLQQAQAAGAEQEVEKFTKRLVKVTKQHNDECKHLLSLMGIPYLDAPSEAEASCAALVKAGKVYAAATEDMDCLTFGSPVLMRHLTASEAKKLPIQEFHLSRILQELGLNQEQFVDLCILLGSDYCESIRGIGPKRAVDLIQKHKSIEEIVRRLDPSKYPVPENWLHKEAHQLFLKPEVLDPESVELKWSEPNEEELVKFMCGEKQFSEERIRSGVKRLSKSRQGSTQGRLDDFFKVTGSLSSAKRKEPEPKGSTKKKAKTGAAGKFKRGK.

Residues 1 to 104 (MGIQGLAKLI…GELAKRSERR (104 aa)) form an N-domain region. A Symmetric dimethylarginine; by PRMT5 modification is found at Arg19. Position 34 (Asp34) interacts with Mg(2+). The DNA site is built by Arg47 and Arg70. Residue Lys80 is modified to N6-acetyllysine. Asp86 contributes to the Mg(2+) binding site. 2 positions are modified to symmetric dimethylarginine; by PRMT5: Arg100 and Arg104. An I-domain region spans residues 122-253 (EVEKFTKRLV…KRAVDLIQKH (132 aa)). Residues Glu158, Glu160, Asp179, and Asp181 each coordinate Mg(2+). Glu158 contacts DNA. At Ser187 the chain carries Phosphoserine; by CDK2. Arg192 is modified (symmetric dimethylarginine; by PRMT5). Ser197 carries the post-translational modification Phosphoserine. The DNA site is built by Gly231 and Asp233. Position 233 (Asp233) interacts with Mg(2+). Residues Ser255, Ser293, and Ser335 each carry the phosphoserine modification. The interval 327 to 380 (RLSKSRQGSTQGRLDDFFKVTGSLSSAKRKEPEPKGSTKKKAKTGAAGKFKRGK) is disordered. The residue at position 336 (Thr336) is a Phosphothreonine. The tract at residues 336–344 (TQGRLDDFF) is interaction with PCNA. Lys354 is modified (N6-acetyllysine). Residues 363–380 (STKKKAKTGAAGKFKRGK) show a composition bias toward basic residues. The residue at position 364 (Thr364) is a Phosphothreonine. Residues Lys375, Lys377, and Lys380 each carry the N6-acetyllysine modification.

The protein belongs to the XPG/RAD2 endonuclease family. FEN1 subfamily. In terms of assembly, interacts with PCNA. Three molecules of FEN1 bind to one PCNA trimer with each molecule binding to one PCNA monomer. PCNA stimulates the nuclease activity without altering cleavage specificity. The C-terminal domain binds EP300; can bind simultaneously to both PCNA and EP300. Interacts with DDX11; this interaction is direct and increases flap endonuclease activity of FEN1. Interacts with WDR4; regulating its endonuclease activity. Interacts with POLB. It depends on Mg(2+) as a cofactor. Post-translationally, acetylated by EP300. Acetylation inhibits both endonuclease and exonuclease activity. Acetylation also reduces DNA-binding activity but does not affect interaction with PCNA or EP300. In terms of processing, phosphorylation upon DNA damage induces relocalization to the nuclear plasma. Phosphorylation at Ser-187 by CDK2 occurs during late S-phase and results in dissociation from PCNA. Methylation at Arg-192 by PRMT5 impedes Ser-187 phosphorylation and increases interaction with PCNA.

The protein resides in the nucleus. It localises to the nucleolus. The protein localises to the nucleoplasm. Its subcellular location is the mitochondrion. Functionally, structure-specific nuclease with 5'-flap endonuclease and 5'-3' exonuclease activities involved in DNA replication and repair. During DNA replication, cleaves the 5'-overhanging flap structure that is generated by displacement synthesis when DNA polymerase encounters the 5'-end of a downstream Okazaki fragment. It enters the flap from the 5'-end and then tracks to cleave the flap base, leaving a nick for ligation. Also involved in the long patch base excision repair (LP-BER) pathway, by cleaving within the apurinic/apyrimidinic (AP) site-terminated flap. Acts as a genome stabilization factor that prevents flaps from equilibrating into structures that lead to duplications and deletions. Also possesses 5'-3' exonuclease activity on nicked or gapped double-stranded DNA, and exhibits RNase H activity. Also involved in replication and repair of rDNA and in repairing mitochondrial DNA. The sequence is that of Flap endonuclease 1 from Macaca fascicularis (Crab-eating macaque).